The chain runs to 222 residues: Holliday junction branch migration complex subunit RuvA (222 aa).

The interval Met-1–Leu-67 is domain I. The interval Asn-68–Thr-146 is domain II. A flexible linker region spans residues Asn-147–Glu-155. Positions Glu-155–Gly-222 are domain III.

It belongs to the RuvA family. As to quaternary structure, homotetramer. Forms an RuvA(8)-RuvB(12)-Holliday junction (HJ) complex. HJ DNA is sandwiched between 2 RuvA tetramers; dsDNA enters through RuvA and exits via RuvB. An RuvB hexamer assembles on each DNA strand where it exits the tetramer. Each RuvB hexamer is contacted by two RuvA subunits (via domain III) on 2 adjacent RuvB subunits; this complex drives branch migration. In the full resolvosome a probable DNA-RuvA(4)-RuvB(12)-RuvC(2) complex forms which resolves the HJ.

It is found in the cytoplasm. In terms of biological role, the RuvA-RuvB-RuvC complex processes Holliday junction (HJ) DNA during genetic recombination and DNA repair, while the RuvA-RuvB complex plays an important role in the rescue of blocked DNA replication forks via replication fork reversal (RFR). RuvA specifically binds to HJ cruciform DNA, conferring on it an open structure. The RuvB hexamer acts as an ATP-dependent pump, pulling dsDNA into and through the RuvAB complex. HJ branch migration allows RuvC to scan DNA until it finds its consensus sequence, where it cleaves and resolves the cruciform DNA. This chain is Holliday junction branch migration complex subunit RuvA, found in Prochlorococcus marinus (strain SARG / CCMP1375 / SS120).